The following is a 331-amino-acid chain: Cytochrome bo(3) ubiquinol oxidase subunit 2 (331 aa).

Residues 1–23 (MTKANPFAALKWLSLAPALLLGG) form the signal peptide. C24 is lipidated: N-palmitoyl cysteine. A lipid anchor (S-diacylglycerol cysteine) is attached at C24. The Periplasmic segment spans residues 24–41 (CDMTLFNPKGQVGMDERT). The chain crosses the membrane as a helical span at residues 42 to 62 (LIITATLLMLIVVIPVIVMTL). Residues 63–86 (AFAWKYRASNTQAEYKPDWHHSNR) lie on the Cytoplasmic side of the membrane. The chain crosses the membrane as a helical span at residues 87–107 (IEAVVWLVPCVIIAILGWITW). Residues 108–331 (ESTHKLDPYR…DMHMQPSTQE (224 aa)) are Periplasmic-facing.

It belongs to the cytochrome c oxidase subunit 2 family. Heterooctamer of two A chains, two B chains, two C chains and two D chains.

The protein localises to the cell inner membrane. In terms of biological role, cytochrome bo(3) ubiquinol terminal oxidase is the component of the aerobic respiratory chain of E.coli that predominates when cells are grown at high aeration. Has proton pump activity across the membrane in addition to electron transfer, pumping 2 protons/electron. The protein is Cytochrome bo(3) ubiquinol oxidase subunit 2 (cyoA) of Pseudomonas aeruginosa (strain ATCC 15692 / DSM 22644 / CIP 104116 / JCM 14847 / LMG 12228 / 1C / PRS 101 / PAO1).